The sequence spans 234 residues: O-antigen biosynthesis glycosyltransferase WbnI (234 aa).

Residues Ile-8–Tyr-13, Asn-93–Val-95, and His-115–Tyr-118 contribute to the substrate site. Glu-185 (nucleophile) is an active-site residue.

The protein belongs to the glycosyltransferase 6 family. It depends on Mn(2+) as a cofactor.

It catalyses the reaction alpha-L-Fuc-(1-&gt;2)-beta-D-Gal-(1-&gt;3)-alpha-D-GalNAc-(1-&gt;3)-alpha-D-GalNAc-di-trans,octa-cis-undecaprenyl diphosphate + UDP-alpha-D-galactose = alpha-L-Fuc-(1-&gt;2)-[alpha-D-Gal-(1-&gt;3)]-beta-D-Gal-(1-&gt;3)-alpha-D-GalNAc-(1-&gt;3)-alpha-D-GalNAc-di-trans,octa-cis-undecaprenyl diphosphate + UDP + H(+). The protein operates within bacterial outer membrane biogenesis; LPS O-antigen biosynthesis. Involved in the assembly of the O-repeating unit during O-antigen biosynthesis. This chain is O-antigen biosynthesis glycosyltransferase WbnI, found in Escherichia coli.